A 310-amino-acid polypeptide reads, in one-letter code: MRRLLSPLFAALIVGVTVLTAPSTSWAYPFWAQQNYDSPREATGKIVCANCHLAQKLTQAEVPQSVLPDSVFKAVVKIPYDTSVPEIGADGSEVPLQVGAVVMLPDGFTLAPQDRWTDDIKEETEGVYFSEYSDDQPNVILVGPIPGDQHQEIVFPVLSPDPATDSNIHFGKYSIHVGGNRGRGQVYPTGEKSNNTVFTAPSTGTVRSIEAGENGASVVTIASADGTELSETVPVGPALIVSVGDAVEAGAPITNDPNVGGFGQLDTEVVLQNPVRIYGLLAFFAAVALAQIMLVLKKKQFEKVQAAEGV.

An N-terminal signal peptide occupies residues 1-27 (MRRLLSPLFAALIVGVTVLTAPSTSWA). Y28, C48, C51, and H52 together coordinate heme. The helical transmembrane segment at 277–297 (IYGLLAFFAAVALAQIMLVLK) threads the bilayer.

Belongs to the cytochrome f family. As to quaternary structure, the 4 large subunits of the cytochrome b6-f complex are cytochrome b6, subunit IV (17 kDa polypeptide, PetD), cytochrome f and the Rieske protein, while the 4 small subunits are PetG, PetL, PetM and PetN. The complex functions as a dimer. Heme is required as a cofactor.

Its subcellular location is the cellular thylakoid membrane. Functionally, component of the cytochrome b6-f complex, which mediates electron transfer between photosystem II (PSII) and photosystem I (PSI), cyclic electron flow around PSI, and state transitions. In Synechococcus sp. (strain WH7803), this protein is Cytochrome f.